Here is a 137-residue protein sequence, read N- to C-terminus: Type 3 secretion system pilotin (137 aa).

A signal peptide spans 1 to 14 (MLLPLALLLGGCVS).

It belongs to the ExsB/YscW family.

The protein resides in the cell outer membrane. In terms of biological role, involved in the synthesis of the type III secretion system (T3SS), also called injectisome, which is used to inject bacterial effector proteins into eukaryotic host cells. Pilot protein that is required for the proper localization of the secretin PscC in the outer membrane. Necessary for full in vivo virulence. This chain is Type 3 secretion system pilotin, found in Pseudomonas aeruginosa (strain ATCC 15692 / DSM 22644 / CIP 104116 / JCM 14847 / LMG 12228 / 1C / PRS 101 / PAO1).